The primary structure comprises 430 residues: Drebrin-like protein (430 aa).

In terms of domain architecture, ADF-H spans 4–133; sequence NLSRNGPALQ…EPECIMEKVA (130 aa). Position 26 is a phosphothreonine (threonine 26). Phosphoserine occurs at positions 137 and 160. Lysine 176 is modified (N6-acetyllysine). Residues 176 to 231 adopt a coiled-coil conformation; sequence KDSFWAKAEKEEENRRLEEKRRAEEAQRQLEQERRERELREAARREQRYQEQGGEA. Residues alanine 183 and serine 232 each carry the phosphoserine modification. Residues 219-283 are disordered; sequence RREQRYQEQG…SSPQPGKLRS (65 aa). Residues 233 to 244 show a composition bias toward polar residues; the sequence is PQRTWEQQQEVV. Residues 245–267 show a composition bias toward basic and acidic residues; the sequence is SRNRNEQESAVHPREIFKQKERA. Polar residues predominate over residues 268–277; the sequence is MSTTSISSPQ. Residues serine 269, serine 272, serine 275, and serine 283 each carry the phosphoserine modification. Lysine 288 is subject to N6-acetyllysine. Residue threonine 291 is modified to Phosphothreonine. Phosphotyrosine is present on residues tyrosine 334 and tyrosine 344. In terms of domain architecture, SH3 spans 371–430; that stretch reads GQGLCARALYDYQAADDTEISFDPENLITGIEVIDEGWWRGYGPDGHFGMFPANYVELIE.

The protein belongs to the ABP1 family. As to quaternary structure, interacts with SHANK2, SHANK3 and SYN1. Interacts with FGD1 and DNM1. Interacts with ANKRD54. Interacts with COBL. Interacts with WASL and WIPF1. Interacts with MAP4K1 and PRAM1. In terms of processing, degraded by caspases during apoptosis.

The protein localises to the cytoplasm. It localises to the cytoskeleton. The protein resides in the cell projection. It is found in the lamellipodium. Its subcellular location is the ruffle. The protein localises to the cell cortex. It localises to the cytosol. The protein resides in the synapse. It is found in the perikaryon. Its subcellular location is the neuron projection. The protein localises to the cell membrane. It localises to the cytoplasmic vesicle. The protein resides in the clathrin-coated vesicle membrane. It is found in the golgi apparatus membrane. Its subcellular location is the podosome. The protein localises to the early endosome. It localises to the dendrite. The protein resides in the postsynaptic density. Functionally, adapter protein that binds F-actin and DNM1, and thereby plays a role in receptor-mediated endocytosis. Plays a role in the reorganization of the actin cytoskeleton, formation of cell projections, such as neurites, in neuron morphogenesis and synapse formation via its interaction with WASL and COBL. Does not bind G-actin and promote actin polymerization by itself. Required for the formation of organized podosome rosettes. May act as a common effector of antigen receptor-signaling pathways in leukocytes. Acts as a key component of the immunological synapse that regulates T-cell activation by bridging TCRs and the actin cytoskeleton to gene activation and endocytic processes. This chain is Drebrin-like protein (DBNL), found in Homo sapiens (Human).